We begin with the raw amino-acid sequence, 545 residues long: Endo-beta-N-acetylglucosaminidase (545 aa).

The signal sequence occupies residues 1–36 (MTFIKQMMPRYVASMTAGIVAAAMAATCAFAPVANA). Residues 51–333 (RHFMVYYRAW…EDLRRIVPSN (283 aa)) form the GH18 domain. Glutamate 184 serves as the catalytic Proton donor. Residues 486-511 (PVPTPDSTDQNGNRDKVTNHKVQGQP) form a disordered region. The chain crosses the membrane as a helical span at residues 518 to 538 (GISTDIIVAVGVTLAIAGVAL).

The protein belongs to the glycosyl hydrolase 18 family.

It is found in the cell membrane. It catalyses the reaction an N(4)-(oligosaccharide-(1-&gt;3)-[oligosaccharide-(1-&gt;6)]-beta-D-Man-(1-&gt;4)-beta-D-GlcNAc-(1-&gt;4)-alpha-D-GlcNAc)-L-asparaginyl-[protein] + H2O = an oligosaccharide-(1-&gt;3)-[oligosaccharide-(1-&gt;6)]-beta-D-Man-(1-&gt;4)-D-GlcNAc + N(4)-(N-acetyl-beta-D-glucosaminyl)-L-asparaginyl-[protein]. Its function is as follows. Endoglycosidase with broad specificity that cleaves the chitobiose core of high mannose and complex N-linked glycans. Is able to release N-glycans from diverse host glycoproteins such as human and bovine lactoferrin, immunoglobulins A and G, and ribonuclease B. Is active directly on human breast milk - a complex matrix of lipids, oligosaccharides, and proteins with disparate glycosylation types - successfully removing a significant proportion of the total amount of N-glycans. Does not recognize O-linked glycans or free human milk oligosaccharides (HMO). The sequence is that of Endo-beta-N-acetylglucosaminidase from Bifidobacterium longum subsp. infantis (strain ATCC 15697 / DSM 20088 / JCM 1222 / NCTC 11817 / S12).